The following is a 691-amino-acid chain: DNA ligase (691 aa).

Residues 41 to 45, 90 to 91, and Glu-130 each bind NAD(+); these read DAEYD and SL. Lys-132 acts as the N6-AMP-lysine intermediate in catalysis. Residues Arg-153, Glu-190, Lys-307, and Lys-331 each contribute to the NAD(+) site. Zn(2+) contacts are provided by Cys-425, Cys-428, Cys-443, and Cys-449. The region spanning 610 to 691 is the BRCT domain; sequence APQGVLAGKT…MHTLLEGHAR (82 aa).

Belongs to the NAD-dependent DNA ligase family. LigA subfamily. Requires Mg(2+) as cofactor. Mn(2+) serves as cofactor.

The enzyme catalyses NAD(+) + (deoxyribonucleotide)n-3'-hydroxyl + 5'-phospho-(deoxyribonucleotide)m = (deoxyribonucleotide)n+m + AMP + beta-nicotinamide D-nucleotide.. In terms of biological role, DNA ligase that catalyzes the formation of phosphodiester linkages between 5'-phosphoryl and 3'-hydroxyl groups in double-stranded DNA using NAD as a coenzyme and as the energy source for the reaction. It is essential for DNA replication and repair of damaged DNA. The polypeptide is DNA ligase (Burkholderia pseudomallei (strain 1710b)).